Consider the following 55-residue polypeptide: Large ribosomal subunit protein bL33 (55 aa).

The protein belongs to the bacterial ribosomal protein bL33 family.

The protein is Large ribosomal subunit protein bL33 of Sodalis glossinidius (strain morsitans).